Reading from the N-terminus, the 352-residue chain is B1 bradykinin receptor (352 aa).

The Extracellular segment spans residues 1-41 (MASWPPLQLQSSNQSQLFPQNATACDNAPEAWDLLHRVLPT). 2 N-linked (GlcNAc...) asparagine glycosylation sites follow: Asn13 and Asn21. A helical membrane pass occupies residues 42-62 (FIISICSFGLLGNLFVLLVFL). Topologically, residues 63–72 (LPRRRLNVAE) are cytoplasmic. A helical transmembrane segment spans residues 73–93 (IYLANLAASDLVFVLGLPFWA). Residues 94–110 (ENIWNQFNWPFGALLCR) lie on the Extracellular side of the membrane. Cys109 and Cys188 are oxidised to a cystine. Residues 111–131 (VINGIIKANLFISIFLVVAIS) traverse the membrane as a helical segment. The Cytoplasmic segment spans residues 132–153 (QDRYCVLVHPMASRRRQRRRQA). Residues 154 to 174 (RVTCVLIWVVGGLLSIPTFLL) traverse the membrane as a helical segment. Topologically, residues 175-206 (RSIQAVPDLNITACILLLPHEAWHFARIVELN) are extracellular. An N-linked (GlcNAc...) asparagine glycan is attached at Asn184. Residues 207–227 (ILAFLLPLAAIIFFNYHILAS) form a helical membrane-spanning segment. Residues 228–250 (LRGREEVSRTRCGGSKDSKTTAL) are Cytoplasmic-facing. A helical membrane pass occupies residues 251-271 (ILTLVVAFLVCWAPYHFFAFL). Over 272–294 (EFLFQVQAVRGCFWEDFIDLGLQ) the chain is Extracellular. The helical transmembrane segment at 295 to 315 (LANFLAFTNSSLNPVIYVFAG) threads the bilayer. Residues 316 to 352 (RLFRTKVWELYKQCTPKSLAPISSSHRKEIFQLFWRN) are Cytoplasmic-facing. Cys329 is lipidated: S-palmitoyl cysteine.

The protein belongs to the G-protein coupled receptor 1 family. Bradykinin receptor subfamily. BDKRB1 sub-subfamily.

The protein localises to the cell membrane. Functionally, this is a receptor for bradykinin. Could be a factor in chronic pain and inflammation. The sequence is that of B1 bradykinin receptor (BDKRB1) from Macaca fascicularis (Crab-eating macaque).